The sequence spans 382 residues: Mannitol-1-phosphate 5-dehydrogenase (382 aa).

3–14 contributes to the NAD(+) binding site; the sequence is ALHFGAGNIGRG.

Belongs to the mannitol dehydrogenase family.

The catalysed reaction is D-mannitol 1-phosphate + NAD(+) = beta-D-fructose 6-phosphate + NADH + H(+). This Salmonella schwarzengrund (strain CVM19633) protein is Mannitol-1-phosphate 5-dehydrogenase.